The primary structure comprises 486 residues: Catalase (486 aa).

A disordered region spans residues 1 to 28; it reads MENKKLTAANGRPIADNQNSQTAGPRGP. Catalysis depends on residues H54 and N127. Position 337 (Y337) interacts with heme.

The protein belongs to the catalase family. Homodimer. Requires heme as cofactor.

It carries out the reaction 2 H2O2 = O2 + 2 H2O. Decomposes hydrogen peroxide into water and oxygen; serves to protect cells from the toxic effects of hydrogen peroxide. May be involved in aerotolerance of B.fragilis. This is Catalase (katA) from Bacteroides fragilis (strain YCH46).